A 467-amino-acid chain; its full sequence is Ribulose bisphosphate carboxylase large chain (467 aa).

Lysine 5 carries the post-translational modification N6,N6,N6-trimethyllysine. Substrate contacts are provided by asparagine 114 and threonine 164. Catalysis depends on lysine 166, which acts as the Proton acceptor. Lysine 168 is a substrate binding site. Positions 192, 194, and 195 each coordinate Mg(2+). The residue at position 192 (lysine 192) is an N6-carboxylysine. Catalysis depends on histidine 285, which acts as the Proton acceptor. Residues arginine 286, histidine 318, and serine 370 each contribute to the substrate site.

Belongs to the RuBisCO large chain family. Type I subfamily. In terms of assembly, heterohexadecamer of 8 large chains and 8 small chains; disulfide-linked. The disulfide link is formed within the large subunit homodimers. It depends on Mg(2+) as a cofactor. In terms of processing, the disulfide bond which can form in the large chain dimeric partners within the hexadecamer appears to be associated with oxidative stress and protein turnover.

Its subcellular location is the plastid. It localises to the chloroplast. It catalyses the reaction 2 (2R)-3-phosphoglycerate + 2 H(+) = D-ribulose 1,5-bisphosphate + CO2 + H2O. The catalysed reaction is D-ribulose 1,5-bisphosphate + O2 = 2-phosphoglycolate + (2R)-3-phosphoglycerate + 2 H(+). RuBisCO catalyzes two reactions: the carboxylation of D-ribulose 1,5-bisphosphate, the primary event in carbon dioxide fixation, as well as the oxidative fragmentation of the pentose substrate in the photorespiration process. Both reactions occur simultaneously and in competition at the same active site. This chain is Ribulose bisphosphate carboxylase large chain, found in Tasmannia insipida (Pepperbush).